Consider the following 476-residue polypeptide: ENTH domain-containing protein C794.11c (476 aa).

The region spanning 30–154 (YTSMEARVRE…VELLNDSERI (125 aa)) is the ENTH domain. 4 disordered regions span residues 157–198 (ERKR…GSYR), 213–308 (NGYH…GFGD), 410–429 (QAGLGLTSQQPTAAKSSGSN), and 444–472 (VHQENSTRERVVSSSSEPVSKTQNFLDND). S173 bears the Phosphoserine mark. Low complexity-rich tracts occupy residues 178–198 (RISTSSKSRFPSFGSSRGSYR) and 213–222 (NGYHDSSSMS). Position 228 is a phosphoserine (S228). Residues 229–240 (DNDVEEYNEDGD) are compositionally biased toward acidic residues. Position 235 is a phosphotyrosine (Y235). Phosphoserine occurs at positions 243 and 244. Over residues 262-271 (QSDKAPEQPK) the composition is skewed to basic and acidic residues. Over residues 444–454 (VHQENSTRERV) the composition is skewed to basic and acidic residues. S459 is modified (phosphoserine).

The polypeptide is ENTH domain-containing protein C794.11c (Schizosaccharomyces pombe (strain 972 / ATCC 24843) (Fission yeast)).